The sequence spans 419 residues: Glutamyl-tRNA reductase (419 aa).

Substrate-binding positions include 49–52 (TCNR), serine 107, 112–114 (EPQ), and glutamine 118. Cysteine 50 acts as the Nucleophile in catalysis. Position 187-192 (187-192 (GAGETI)) interacts with NADP(+).

This sequence belongs to the glutamyl-tRNA reductase family. As to quaternary structure, homodimer.

The enzyme catalyses (S)-4-amino-5-oxopentanoate + tRNA(Glu) + NADP(+) = L-glutamyl-tRNA(Glu) + NADPH + H(+). It functions in the pathway porphyrin-containing compound metabolism; protoporphyrin-IX biosynthesis; 5-aminolevulinate from L-glutamyl-tRNA(Glu): step 1/2. Functionally, catalyzes the NADPH-dependent reduction of glutamyl-tRNA(Glu) to glutamate 1-semialdehyde (GSA). The polypeptide is Glutamyl-tRNA reductase (Vibrio cholerae serotype O1 (strain ATCC 39541 / Classical Ogawa 395 / O395)).